Here is a 48-residue protein sequence, read N- to C-terminus: ATP synthase protein 8 (48 aa).

A helical transmembrane segment spans residues 12–32; it reads LLTGGILAISLLLYFVATYLL.

It belongs to the ATPase protein 8 family. In terms of assembly, F-type ATPases have 2 components, CF(1) - the catalytic core - and CF(0) - the membrane proton channel.

It localises to the mitochondrion membrane. In terms of biological role, mitochondrial membrane ATP synthase (F(1)F(0) ATP synthase or Complex V) produces ATP from ADP in the presence of a proton gradient across the membrane which is generated by electron transport complexes of the respiratory chain. F-type ATPases consist of two structural domains, F(1) - containing the extramembraneous catalytic core and F(0) - containing the membrane proton channel, linked together by a central stalk and a peripheral stalk. During catalysis, ATP synthesis in the catalytic domain of F(1) is coupled via a rotary mechanism of the central stalk subunits to proton translocation. Part of the complex F(0) domain. Minor subunit located with subunit a in the membrane. In Candida parapsilosis (Yeast), this protein is ATP synthase protein 8 (ATP8).